Consider the following 107-residue polypeptide: Replication protein A 14 kDa subunit A (107 aa).

An N-acetylmethionine modification is found at Met1.

Belongs to the replication factor A protein 3 family. As to quaternary structure, component of the heterotrimeric canonical replication protein A complex (RPA).

The protein localises to the nucleus. In terms of biological role, as part of the replication protein A (RPA/RP-A), a single-stranded DNA-binding heterotrimeric complex, may play an essential role in DNA replication, recombination and repair. Binds and stabilizes single-stranded DNA intermediates, preventing complementary DNA reannealing and recruiting different proteins involved in DNA metabolism. The sequence is that of Replication protein A 14 kDa subunit A (RPA3A) from Arabidopsis thaliana (Mouse-ear cress).